Reading from the N-terminus, the 89-residue chain is Elongation factor 1-beta (89 aa).

Belongs to the EF-1-beta/EF-1-delta family.

In terms of biological role, promotes the exchange of GDP for GTP in EF-1-alpha/GDP, thus allowing the regeneration of EF-1-alpha/GTP that could then be used to form the ternary complex EF-1-alpha/GTP/AAtRNA. This chain is Elongation factor 1-beta (ef1b), found in Methanothermobacter thermautotrophicus (strain ATCC 29096 / DSM 1053 / JCM 10044 / NBRC 100330 / Delta H) (Methanobacterium thermoautotrophicum).